A 396-amino-acid chain; its full sequence is 3-amino-4-hydroxybenzoic acid synthase (396 aa).

The interval 1–29 is disordered; it reads MSSSPSPSPSSSSSSSASSSASSSPSSSS.

This sequence belongs to the archaeal-type DHQ synthase family. GriH subfamily. In terms of assembly, monomer. Requires Mn(2+) as cofactor.

The enzyme catalyses 2-amino-4,5-dihydroxy-6-oxo-7-(phosphooxy)heptanoate = 3-amino-4-hydroxybenzoate + phosphate + 2 H2O + H(+). Functionally, catalyzes the cyclization of 2-amino-4,5-dihydroxy-6-one-heptanoic acid-7-phosphate to yield 3-amino-4-hydroxybenzoic acid (3,4-AHBA). In Streptomyces griseus subsp. griseus (strain JCM 4626 / CBS 651.72 / NBRC 13350 / KCC S-0626 / ISP 5235), this protein is 3-amino-4-hydroxybenzoic acid synthase (griH).